The following is a 428-amino-acid chain: Glutamyl-tRNA reductase (428 aa).

Substrate contacts are provided by residues Thr49 to Arg52, Ser109, Glu114 to Gln116, and Gln120. The active-site Nucleophile is Cys50. Position 189–194 (Gly189–Ala194) interacts with NADP(+).

The protein belongs to the glutamyl-tRNA reductase family. Homodimer.

It catalyses the reaction (S)-4-amino-5-oxopentanoate + tRNA(Glu) + NADP(+) = L-glutamyl-tRNA(Glu) + NADPH + H(+). It participates in porphyrin-containing compound metabolism; protoporphyrin-IX biosynthesis; 5-aminolevulinate from L-glutamyl-tRNA(Glu): step 1/2. Its pathway is porphyrin-containing compound metabolism; chlorophyll biosynthesis. Catalyzes the NADPH-dependent reduction of glutamyl-tRNA(Glu) to glutamate 1-semialdehyde (GSA). The polypeptide is Glutamyl-tRNA reductase (Rippkaea orientalis (strain PCC 8801 / RF-1) (Cyanothece sp. (strain PCC 8801))).